The following is a 131-amino-acid chain: Fumarate reductase subunit C (131 aa).

3 consecutive transmembrane segments (helical) span residues 30–50 (EGTA…LFAL), 63–83 (FLQN…ALLH), and 109–129 (IIKS…FVAL).

Belongs to the FrdC family. In terms of assembly, part of an enzyme complex containing four subunits: a flavoprotein (FrdA), an iron-sulfur protein (FrdB), and two hydrophobic anchor proteins (FrdC and FrdD).

The protein localises to the cell inner membrane. In terms of biological role, two distinct, membrane-bound, FAD-containing enzymes are responsible for the catalysis of fumarate and succinate interconversion; fumarate reductase is used in anaerobic growth, and succinate dehydrogenase is used in aerobic growth. Anchors the catalytic components of the fumarate reductase complex to the cell inner membrane, binds quinones. This Shigella dysenteriae serotype 1 (strain Sd197) protein is Fumarate reductase subunit C.